The following is a 270-amino-acid chain: Shikimate dehydrogenase (NADP(+)) (270 aa).

Shikimate contacts are provided by residues 15 to 17 (SKS) and T62. K66 functions as the Proton acceptor in the catalytic mechanism. D78 contributes to the NADP(+) binding site. The shikimate site is built by N87 and D103. NADP(+)-binding positions include 128-132 (GAGGA), 152-157 (NRTVDR), and L213. Y215 serves as a coordination point for shikimate. G237 serves as a coordination point for NADP(+).

It belongs to the shikimate dehydrogenase family. Homodimer.

It carries out the reaction shikimate + NADP(+) = 3-dehydroshikimate + NADPH + H(+). It functions in the pathway metabolic intermediate biosynthesis; chorismate biosynthesis; chorismate from D-erythrose 4-phosphate and phosphoenolpyruvate: step 4/7. Functionally, involved in the biosynthesis of the chorismate, which leads to the biosynthesis of aromatic amino acids. Catalyzes the reversible NADPH linked reduction of 3-dehydroshikimate (DHSA) to yield shikimate (SA). This Halorhodospira halophila (strain DSM 244 / SL1) (Ectothiorhodospira halophila (strain DSM 244 / SL1)) protein is Shikimate dehydrogenase (NADP(+)).